A 375-amino-acid polypeptide reads, in one-letter code: Alcohol dehydrogenase 4, mitochondrial (375 aa).

The transit peptide at 1–27 (MFRLARAQTALANKASVSRSFLRLNSS) directs the protein to the mitochondrion. Residues Cys71, His94, Cys125, Cys128, Cys131, Cys139, and Cys181 each contribute to the Zn(2+) site. NAD(+) contacts are provided by residues 205 to 211 (GAAGGLG), Asp229, Lys234, 296 to 298 (VGL), and Arg368.

It belongs to the zinc-containing alcohol dehydrogenase family. Homotetramer. The cofactor is Zn(2+).

It is found in the mitochondrion matrix. It catalyses the reaction a primary alcohol + NAD(+) = an aldehyde + NADH + H(+). The catalysed reaction is a secondary alcohol + NAD(+) = a ketone + NADH + H(+). This chain is Alcohol dehydrogenase 4, mitochondrial (ADH4), found in Kluyveromyces lactis (strain ATCC 8585 / CBS 2359 / DSM 70799 / NBRC 1267 / NRRL Y-1140 / WM37) (Yeast).